A 257-amino-acid chain; its full sequence is Imidazole glycerol phosphate synthase subunit HisF (257 aa).

Active-site residues include Asp12 and Asp131.

It belongs to the HisA/HisF family. Heterodimer of HisH and HisF.

It localises to the cytoplasm. The enzyme catalyses 5-[(5-phospho-1-deoxy-D-ribulos-1-ylimino)methylamino]-1-(5-phospho-beta-D-ribosyl)imidazole-4-carboxamide + L-glutamine = D-erythro-1-(imidazol-4-yl)glycerol 3-phosphate + 5-amino-1-(5-phospho-beta-D-ribosyl)imidazole-4-carboxamide + L-glutamate + H(+). It participates in amino-acid biosynthesis; L-histidine biosynthesis; L-histidine from 5-phospho-alpha-D-ribose 1-diphosphate: step 5/9. IGPS catalyzes the conversion of PRFAR and glutamine to IGP, AICAR and glutamate. The HisF subunit catalyzes the cyclization activity that produces IGP and AICAR from PRFAR using the ammonia provided by the HisH subunit. This is Imidazole glycerol phosphate synthase subunit HisF from Burkholderia pseudomallei (strain 1106a).